Consider the following 365-residue polypeptide: 3-dehydroquinate synthase (365 aa).

NAD(+)-binding positions include 75–80 (DAESGK), 109–113 (GAATD), 133–134 (TT), Lys146, and Lys155. Zn(2+) is bound by residues Glu188, His253, and His269.

The protein belongs to the sugar phosphate cyclases superfamily. Dehydroquinate synthase family. Requires NAD(+) as cofactor. It depends on Co(2+) as a cofactor. Zn(2+) serves as cofactor.

It localises to the cytoplasm. It carries out the reaction 7-phospho-2-dehydro-3-deoxy-D-arabino-heptonate = 3-dehydroquinate + phosphate. It functions in the pathway metabolic intermediate biosynthesis; chorismate biosynthesis; chorismate from D-erythrose 4-phosphate and phosphoenolpyruvate: step 2/7. Catalyzes the conversion of 3-deoxy-D-arabino-heptulosonate 7-phosphate (DAHP) to dehydroquinate (DHQ). In Corynebacterium efficiens (strain DSM 44549 / YS-314 / AJ 12310 / JCM 11189 / NBRC 100395), this protein is 3-dehydroquinate synthase.